A 455-amino-acid polypeptide reads, in one-letter code: Argininosuccinate lyase (455 aa).

It belongs to the lyase 1 family. Argininosuccinate lyase subfamily.

The protein localises to the cytoplasm. The enzyme catalyses 2-(N(omega)-L-arginino)succinate = fumarate + L-arginine. It functions in the pathway amino-acid biosynthesis; L-arginine biosynthesis; L-arginine from L-ornithine and carbamoyl phosphate: step 3/3. This Shewanella sp. (strain MR-4) protein is Argininosuccinate lyase.